The chain runs to 316 residues: Pantothenate kinase (316 aa).

Position 95–102 (95–102 (GSVAVGKS)) interacts with ATP.

The protein belongs to the prokaryotic pantothenate kinase family.

The protein resides in the cytoplasm. The enzyme catalyses (R)-pantothenate + ATP = (R)-4'-phosphopantothenate + ADP + H(+). It participates in cofactor biosynthesis; coenzyme A biosynthesis; CoA from (R)-pantothenate: step 1/5. The polypeptide is Pantothenate kinase (Shigella sonnei (strain Ss046)).